The primary structure comprises 419 residues: 4-hydroxyphenylpyruvate dioxygenase (419 aa).

VOC domains are found at residues 41 to 187 and 218 to 376; these read GYHH…FIQR and AIDH…LFTK. Residues His-221, His-304, and Glu-387 each coordinate Fe cation.

The protein belongs to the 4HPPD family. The cofactor is Fe cation.

It carries out the reaction 3-(4-hydroxyphenyl)pyruvate + O2 = homogentisate + CO2. It functions in the pathway amino-acid degradation; L-phenylalanine degradation; acetoacetate and fumarate from L-phenylalanine: step 3/6. This is 4-hydroxyphenylpyruvate dioxygenase (HPPD) from Zymoseptoria tritici (Speckled leaf blotch fungus).